The chain runs to 252 residues: MTAPADKGKKAKTDADGGAAEENEQIDGALVLSIEKLQEIQDELEKVNEEASDKVLEVEQKYSEIRRPVYLRRSDIIQTIPDFWLTAFLSHPLLSELLTEEDQKMFKYLESVDVDDSKDVKSGYSITLTFSENPYFEDKELTKTYAFADDGTTTINATCIKWKEGMEIANGNAKKKGSKRPLVEESFFTWFTDTEHKSLADGVQDEVAEIIKEDLWPNPLKYFNNEAEELGEDDDEEGSDADEGEEDEEEEN.

Over residues 1-15 (MTAPADKGKKAKTDA) the composition is skewed to basic and acidic residues. The tract at residues 1–23 (MTAPADKGKKAKTDADGGAAEEN) is disordered. Positions 26-67 (IDGALVLSIEKLQEIQDELEKVNEEASDKVLEVEQKYSEIRR) form a coiled coil. The disordered stretch occupies residues 222 to 252 (YFNNEAEELGEDDDEEGSDADEGEEDEEEEN). Over residues 226 to 252 (EAEELGEDDDEEGSDADEGEEDEEEEN) the composition is skewed to acidic residues.

Belongs to the nucleosome assembly protein (NAP) family.

The protein localises to the nucleus. It is found in the cytoplasm. Functionally, acts as a histone H2A/H2B chaperone in nucleosome assembly. The sequence is that of NAP1-related protein 2 from Oryza sativa subsp. indica (Rice).